Here is a 622-residue protein sequence, read N- to C-terminus: tRNA uridine 5-carboxymethylaminomethyl modification enzyme MnmG (622 aa).

Gly-10–Gly-15 contributes to the FAD binding site. NAD(+) is bound at residue Gly-269 to Phe-283.

This sequence belongs to the MnmG family. Homodimer. Heterotetramer of two MnmE and two MnmG subunits. It depends on FAD as a cofactor.

The protein resides in the cytoplasm. NAD-binding protein involved in the addition of a carboxymethylaminomethyl (cmnm) group at the wobble position (U34) of certain tRNAs, forming tRNA-cmnm(5)s(2)U34. The sequence is that of tRNA uridine 5-carboxymethylaminomethyl modification enzyme MnmG from Bartonella quintana (strain Toulouse) (Rochalimaea quintana).